The sequence spans 420 residues: Glucose-1-phosphate adenylyltransferase (420 aa).

Alpha-D-glucose 1-phosphate contacts are provided by residues Tyr-107, Gly-172, 187-188, and Ser-205; that span reads EK.

This sequence belongs to the bacterial/plant glucose-1-phosphate adenylyltransferase family. Homotetramer.

It carries out the reaction alpha-D-glucose 1-phosphate + ATP + H(+) = ADP-alpha-D-glucose + diphosphate. It participates in glycan biosynthesis; glycogen biosynthesis. Functionally, involved in the biosynthesis of ADP-glucose, a building block required for the elongation reactions to produce glycogen. Catalyzes the reaction between ATP and alpha-D-glucose 1-phosphate (G1P) to produce pyrophosphate and ADP-Glc. This chain is Glucose-1-phosphate adenylyltransferase, found in Bradyrhizobium diazoefficiens (strain JCM 10833 / BCRC 13528 / IAM 13628 / NBRC 14792 / USDA 110).